The primary structure comprises 369 residues: Maltose/maltodextrin import ATP-binding protein MalK (369 aa).

The ABC transporter domain maps to 4–234 (VQLRNVTKAW…PADRFVAGFI (231 aa)). Residue 36–43 (GPSGCGKS) participates in ATP binding.

The protein belongs to the ABC transporter superfamily. Maltooligosaccharide importer (TC 3.A.1.1.1) family. In terms of assembly, the complex is composed of two ATP-binding proteins (MalK), two transmembrane proteins (MalG and MalK) and a solute-binding protein (MalE).

Its subcellular location is the cell inner membrane. The enzyme catalyses D-maltose(out) + ATP + H2O = D-maltose(in) + ADP + phosphate + H(+). Part of the ABC transporter complex MalEFGK involved in maltose/maltodextrin import. Responsible for energy coupling to the transport system. The sequence is that of Maltose/maltodextrin import ATP-binding protein MalK from Salmonella typhi.